Consider the following 577-residue polypeptide: Sulfite reductase [NADPH] hemoprotein beta-component (577 aa).

[4Fe-4S] cluster contacts are provided by Cys-441, Cys-447, Cys-486, and Cys-490. A siroheme-binding site is contributed by Cys-490.

It belongs to the nitrite and sulfite reductase 4Fe-4S domain family. In terms of assembly, alpha(8)-beta(8). The alpha component is a flavoprotein, the beta component is a hemoprotein. It depends on siroheme as a cofactor. Requires [4Fe-4S] cluster as cofactor.

It catalyses the reaction hydrogen sulfide + 3 NADP(+) + 3 H2O = sulfite + 3 NADPH + 4 H(+). The protein operates within sulfur metabolism; hydrogen sulfide biosynthesis; hydrogen sulfide from sulfite (NADPH route): step 1/1. Its function is as follows. Component of the sulfite reductase complex that catalyzes the 6-electron reduction of sulfite to sulfide. This is one of several activities required for the biosynthesis of L-cysteine from sulfate. This is Sulfite reductase [NADPH] hemoprotein beta-component from Pectobacterium atrosepticum (strain SCRI 1043 / ATCC BAA-672) (Erwinia carotovora subsp. atroseptica).